We begin with the raw amino-acid sequence, 163 residues long: C-type lectin lectoxin-Lio2 (163 aa).

The first 21 residues, 1–21 (MERFIFAALLVVALSLSGTGA), serve as a signal peptide directing secretion. 3 disulfide bridges follow: cysteine 25–cysteine 36, cysteine 53–cysteine 152, and cysteine 127–cysteine 144. The C-type lectin domain maps to 32–153 (SDGYCYKVFK…CRSKRYFICK (122 aa)). The Mannose-binding signature appears at 117 to 119 (EPN). The Ca(2+) site is built by glutamate 125 and aspartate 141.

It belongs to the true venom lectin family. As to expression, expressed by the venom gland.

The protein resides in the secreted. In terms of biological role, mannose-binding lectin which recognizes specific carbohydrate structures and agglutinates a variety of animal cells by binding to cell-surface glycoproteins and glycolipids. May be a calcium-dependent lectin. The protein is C-type lectin lectoxin-Lio2 of Erythrolamprus poecilogyrus (Water snake).